The chain runs to 339 residues: Immunoglobulin-binding protein 1 (339 aa).

Position 2 is an N-acetylalanine (Ala2). A UIM domain is found at 46–60 (LDLLEKAAEMLSQLD). The interval 98-202 (RLDHLQRARE…YLLHLQRWID (105 aa)) is interaction with PPP2CA. Disordered regions lie at residues 221-243 (RDSSREASTSNSSRQERPPVKPF) and 289-339 (APEE…QNMG). An interaction with MID1 region spans residues 225 to 290 (REASTSNSSR…PDQGIAKAAP (66 aa)). Lys241 carries the post-translational modification N6-acetyllysine. The segment covering 301-312 (EEQEEKEEEDDE) has biased composition (acidic residues). Residues 313-329 (QTLHRAREWDDWKDTHP) show a composition bias toward basic and acidic residues.

The protein belongs to the IGBP1/TAP42 family. As to quaternary structure, interacts with partially folded PPP2CA, but not with the fully active protein. Interacts with PPP2CB, and with PP4 and PP6. Interacts with MID1 and MID2. Interacts with ubiquitin. Post-translationally, phosphorylated. In terms of processing, monoubiquitination by MID1 triggers calpain-mediated cleavage and switches IGBP1 activity from protective to destructive. As to expression, ubiquitously expressed with highest levels in heart, skeletal muscle and pancreas.

The protein localises to the cytoplasm. Its function is as follows. Associated to surface IgM-receptor; may be involved in signal transduction. Involved in regulation of the catalytic activity of the phosphatases PP2A, PP4 and PP6 by protecting their partially folded catalytic subunits from degradative polyubiquitination until they associate with regulatory subunits. The polypeptide is Immunoglobulin-binding protein 1 (IGBP1) (Homo sapiens (Human)).